A 432-amino-acid polypeptide reads, in one-letter code: Ribosomal protein uS12 methylthiotransferase RimO (432 aa).

The MTTase N-terminal domain maps to 4-122 (NKVDIITLGC…LISDLGKSYH (119 aa)). Cys-13, Cys-51, Cys-85, Cys-146, Cys-150, and Cys-153 together coordinate [4Fe-4S] cluster. Residues 132 to 363 (TTPRHYAYVK…MRVQEGISAD (232 aa)) enclose the Radical SAM core domain. The region spanning 366-432 (ASKVGQTFRV…AFDLYGKVLN (67 aa)) is the TRAM domain.

Belongs to the methylthiotransferase family. RimO subfamily. It depends on [4Fe-4S] cluster as a cofactor.

It is found in the cytoplasm. The catalysed reaction is L-aspartate(89)-[ribosomal protein uS12]-hydrogen + (sulfur carrier)-SH + AH2 + 2 S-adenosyl-L-methionine = 3-methylsulfanyl-L-aspartate(89)-[ribosomal protein uS12]-hydrogen + (sulfur carrier)-H + 5'-deoxyadenosine + L-methionine + A + S-adenosyl-L-homocysteine + 2 H(+). In terms of biological role, catalyzes the methylthiolation of an aspartic acid residue of ribosomal protein uS12. This chain is Ribosomal protein uS12 methylthiotransferase RimO, found in Parabacteroides distasonis (strain ATCC 8503 / DSM 20701 / CIP 104284 / JCM 5825 / NCTC 11152).